A 364-amino-acid chain; its full sequence is Spermidine/putrescine import ATP-binding protein PotA (364 aa).

Residues 5 to 235 form the ABC transporter domain; sequence LSFKDVSKGF…PVNRFVADFI (231 aa). Position 37-44 (37-44) interacts with ATP; the sequence is GPSGCGKT.

It belongs to the ABC transporter superfamily. Spermidine/putrescine importer (TC 3.A.1.11.1) family. The complex is composed of two ATP-binding proteins (PotA), two transmembrane proteins (PotB and PotC) and a solute-binding protein (PotD).

The protein localises to the cell membrane. The enzyme catalyses ATP + H2O + polyamine-[polyamine-binding protein]Side 1 = ADP + phosphate + polyamineSide 2 + [polyamine-binding protein]Side 1.. In terms of biological role, part of the ABC transporter complex PotABCD involved in spermidine/putrescine import. Responsible for energy coupling to the transport system. This is Spermidine/putrescine import ATP-binding protein PotA from Staphylococcus epidermidis (strain ATCC 35984 / DSM 28319 / BCRC 17069 / CCUG 31568 / BM 3577 / RP62A).